The primary structure comprises 112 residues: Protein BEX3 (112 aa).

Residues 1–45 are disordered; sequence MANIHQENEEMEQPVQNGEEDRPLGGGEGHQPERNHRRGQARRLA. Residues 69–94 are interaction with p75NTR/NGFR; it reads EIFMEEMREIRRKLRELQLRNCLRIL. Positions 69–112 are interaction with 14-3-3 epsilon; it reads EIFMEEMREIRRKLRELQLRNCLRILMGELSNHHDHHDEFCLMP. A Nuclear export signal motif is present at residues 78-88; sequence IRRKLRELQLR. The tract at residues 101-105 is his cluster; sequence HHDHH. C109 is a binding site for Zn(2+).

The protein belongs to the BEX family. As to quaternary structure, self-associates. Binds to the DEATH domain of p75NTR/NGFR. Interacts with 14-3-3 epsilon (YWHAE). Interacts with DIABLO/SMAC. Post-translationally, ubiquitinated. Degraded by the proteasome.

Its subcellular location is the nucleus. The protein localises to the cytoplasm. The protein resides in the cytosol. May be a signaling adapter molecule involved in NGFR/p75NTR-mediated apoptosis induced by NGF. Plays a role in zinc-triggered neuronal death. In absence of reductive stress, acts as a pseudosubstrate for the CRL2(FEM1B) complex: associates with FEM1B via zinc, thereby preventing association between FEM1B and its substrates. The sequence is that of Protein BEX3 from Bos taurus (Bovine).